The sequence spans 400 residues: Acetate kinase (400 aa).

Asn10 lines the Mg(2+) pocket. Position 17 (Lys17) interacts with ATP. Residue Arg91 participates in substrate binding. Asp150 serves as the catalytic Proton donor/acceptor. Residues 210–214, 285–287, and 333–337 each bind ATP; these read HLGNG, DCR, and GIGEN. Residue Glu387 coordinates Mg(2+).

Belongs to the acetokinase family. As to quaternary structure, homodimer. Mg(2+) is required as a cofactor. The cofactor is Mn(2+).

It is found in the cytoplasm. It catalyses the reaction acetate + ATP = acetyl phosphate + ADP. It participates in metabolic intermediate biosynthesis; acetyl-CoA biosynthesis; acetyl-CoA from acetate: step 1/2. Functionally, catalyzes the formation of acetyl phosphate from acetate and ATP. Can also catalyze the reverse reaction. The chain is Acetate kinase from Yersinia pestis bv. Antiqua (strain Antiqua).